A 959-amino-acid chain; its full sequence is Translation initiation factor IF-2 (959 aa).

Residues 33 to 373 (SHASSVEEAD…PVTERKFHEL (341 aa)) form a disordered region. Residues 46–60 (IASSFSAGVTKNVQA) show a composition bias toward polar residues. A compositionally biased stretch (basic and acidic residues) spans 63 to 73 (AKDKQVAEQKA). Residues 76–100 (AKATTPQPAASKAAEKPAAATQEAS) show a composition bias toward low complexity. Basic and acidic residues-rich tracts occupy residues 112-125 (FKAE…EQVA), 134-143 (SNDRKSDYRQ), and 179-192 (NDGH…DKNR). Positions 193–211 (SFNANSRQQDIGRQGQTQA) are enriched in polar residues. Basic and acidic residues-rich tracts occupy residues 234 to 258 (ARQR…RQEA) and 266 to 276 (QTEDKKHREAP). Over residues 277 to 287 (AKATEPAEPVA) the composition is skewed to low complexity. Over residues 306–323 (NRPDKAHDRDHGLEDGQK) the composition is skewed to basic and acidic residues. Positions 328-346 (SWNSQNQVRNQKNSNWNNN) are enriched in low complexity. Basic residues predominate over residues 347–357 (KKNKKGKHHKN). Positions 460–629 (ERAPVVTIMG…LLVAEVEELK (170 aa)) constitute a tr-type G domain. Residues 469 to 476 (GHVDHGKT) form a G1 region. 469–476 (GHVDHGKT) provides a ligand contact to GTP. A G2 region spans residues 494 to 498 (GITQH). Residues 515 to 518 (DTPG) are G3. Residues 515–519 (DTPGH) and 569–572 (NKID) contribute to the GTP site. Positions 569–572 (NKID) are G4. The interval 605-607 (SAK) is G5.

This sequence belongs to the TRAFAC class translation factor GTPase superfamily. Classic translation factor GTPase family. IF-2 subfamily.

It localises to the cytoplasm. In terms of biological role, one of the essential components for the initiation of protein synthesis. Protects formylmethionyl-tRNA from spontaneous hydrolysis and promotes its binding to the 30S ribosomal subunits. Also involved in the hydrolysis of GTP during the formation of the 70S ribosomal complex. This chain is Translation initiation factor IF-2, found in Streptococcus equi subsp. zooepidemicus (strain H70).